The primary structure comprises 370 residues: Popeye domain-containing 2 (370 aa).

2 helical membrane passes run 51 to 71 (ALYIFSFLAPAFLCLALWGWL) and 78 to 98 (VFIWNLLLMLQCLAQVCHLIF). The segment at 275-349 (PSPPGSEGGS…SGEDSTSLIL (75 aa)) is disordered. Low complexity predominate over residues 283 to 294 (GSASSPPRGSLG). 2 stretches are compositionally biased toward polar residues: residues 307 to 319 (NPGSGTRNPQPDQ) and 330 to 347 (QHWSSDTEMPSGEDSTSL).

Belongs to the popeye family. Expressed in the heart and, slightly, in skeletal muscle.

Its subcellular location is the membrane. The protein localises to the cell membrane. The protein resides in the sarcolemma. Functionally, important for striated muscle differentiation and cardiac morphogenesis. Is also required for cardiac conduction system development, plays a regulatory function in heart rate dynamics mediated, at least in part, through cAMP-binding. In Danio rerio (Zebrafish), this protein is Popeye domain-containing 2.